We begin with the raw amino-acid sequence, 83 residues long: Toxin To12 (83 aa).

The first 19 residues, Met1–Ala19, serve as a signal peptide directing secretion. The LCN-type CS-alpha/beta domain maps to Lys20–Gly82. Cystine bridges form between Cys30–Cys81, Cys34–Cys57, Cys42–Cys62, and Cys46–Cys64. A Cysteine amide modification is found at Cys81.

Belongs to the long (4 C-C) scorpion toxin superfamily. Sodium channel inhibitor family. Beta subfamily. As to expression, expressed by the venom gland.

It is found in the secreted. Beta toxins bind voltage-independently at site-4 of sodium channels (Nav) and shift the voltage of activation toward more negative potentials thereby affecting sodium channel activation and promoting spontaneous and repetitive firing. This Tityus obscurus (Amazonian scorpion) protein is Toxin To12.